A 1365-amino-acid polypeptide reads, in one-letter code: Homeotic protein spalt-major (1365 aa).

Disordered regions lie at residues 47 to 194 (SADK…EVTL), 270 to 298 (QAKQ…EEEE), and 322 to 363 (LINA…NTHK). Low complexity-rich tracts occupy residues 63-76 (SPLT…SPSR) and 87-99 (EQST…PEQS). Basic and acidic residues predominate over residues 103–117 (HQLENDIKSEAKSEI). A compositionally biased stretch (low complexity) spans 146–157 (PSSPVAEASAEE). Over residues 159 to 181 (ATERTPEKEKEKDVEVDVEKPDE) the composition is skewed to basic and acidic residues. Positions 275-298 (EDTEEDADQEQDQEQETDTYEEEE) are enriched in acidic residues. The span at 346-363 (HDHESQPNRRPSLDNTHK) shows a compositional bias: basic and acidic residues. 2 C2H2-type zinc fingers span residues 451–473 (HRCR…IRSH) and 479–501 (FKCN…FQRH). Disordered stretches follow at residues 508–554 (VPMN…ASFP) and 586–716 (ELPT…TPGQ). The segment covering 530–539 (MSPTDSSPNH) has biased composition (polar residues). Pro residues predominate over residues 540–554 (SPAPPPLGSAPASFP). 2 stretches are compositionally biased toward basic and acidic residues: residues 603–622 (PQVK…HEQE) and 638–662 (VRIK…EPRR). S739 and S744 each carry phosphoserine. Residues 740 to 772 (PEHHSPVRSPAGGALPPGVPPPPHHHPHHMARS) form a disordered region. 3 consecutive C2H2-type zinc fingers follow at residues 824 to 846 (NQCV…YRTH), 852 to 874 (FKCR…MAVH), and 884 to 906 (HQCP…IRLH). 3 disordered regions span residues 948–1012 (ALPG…RSGD), 1030–1129 (VVNT…ILTS), and 1146–1241 (HHLQ…GARP). Over residues 976–991 (DMDDNMDCGEDYDDDV) the composition is skewed to acidic residues. A compositionally biased stretch (low complexity) spans 1040 to 1054 (SSASSHGHSVGSTSA). Residues 1055–1079 (PTSPSVHASSQVIKRSSSPARSEAS) are compositionally biased toward polar residues. A phosphoserine mark is found at S1076 and S1079. 3 stretches are compositionally biased toward low complexity: residues 1085–1100 (LTPR…SRSP), 1114–1123 (RSPSGSSHAS), and 1146–1168 (HHLQ…AAAA). Residues 1181–1191 (QHQEQLRREAA) are compositionally biased toward basic and acidic residues. A compositionally biased stretch (low complexity) spans 1192–1218 (EAQQKAAAAAAAAAAAAAAQRQTPPQA). 2 C2H2-type zinc fingers span residues 1289–1311 (TTCG…YRSH) and 1317–1339 (FKCS…MLTH).

It belongs to the sal C2H2-type zinc-finger protein family.

It localises to the nucleus. Required for the establishment of the posterior-most head and the anterior-most tail segments of the embryo. Probably function as a transcriptional regulator. Could repress the transcription of the tsh gene. This Drosophila melanogaster (Fruit fly) protein is Homeotic protein spalt-major (salm).